Consider the following 436-residue polypeptide: Probable G-protein coupled receptor C06G4.5 (436 aa).

Residues 1–53 (MSTNLVDYVDDSYLNQSMNSENGLDSVTQIMYDMKKYNIVNDVLPPPNHEDLH) lie on the Extracellular side of the membrane. The N-linked (GlcNAc...) asparagine glycan is linked to Asn15. Residues 54–74 (VVIMAVSYLLLFLLGTCGNVA) traverse the membrane as a helical segment. The Cytoplasmic segment spans residues 75–94 (VLTTIYHVIRSSRATLDNTL). A helical membrane pass occupies residues 95–115 (IYVIVLSCVDFGVCLSLPITV). At 116–132 (IDQILGFWMFGKIPCKL) the chain is on the extracellular side. A helical transmembrane segment spans residues 133-153 (HAVFENFGKILSALILTAMSF). The Cytoplasmic segment spans residues 154–171 (DRYAGVCHPQRKRLRSRN). The helical transmembrane segment at 172-192 (FAITILLVLAVYAFITLCPLL) threads the bilayer. Residues 193 to 230 (WSFTAREIILYAKETAPGMLTRMKIEKCTVDIDSQMFT) are Extracellular-facing. A helical transmembrane segment spans residues 231 to 251 (AFTIYQFILCYCTPLVLIAFF). Residues 252–281 (YTKLLSKLREHTRTFKSSQIPFLHISLYTL) lie on the Cytoplasmic side of the membrane. Residues 282-302 (AVACFYFLCWTPFWMATLFAV) form a helical membrane-spanning segment. At 303–316 (YLENSANSSSVPPV) the chain is on the extracellular side. N-linked (GlcNAc...) asparagine glycosylation is present at Asn309. A helical membrane pass occupies residues 317-337 (FVYIMYFIHALPFTNSAINWI). At 338-436 (LYGALNGQLQ…LLSNHNPTFL (99 aa)) the chain is on the cytoplasmic side.

Belongs to the G-protein coupled receptor 1 family.

It is found in the cell membrane. Its function is as follows. Putative receptor. This chain is Probable G-protein coupled receptor C06G4.5, found in Caenorhabditis elegans.